The following is a 274-amino-acid chain: Diaminopimelate epimerase (274 aa).

The substrate site is built by asparagine 11, glutamine 44, and asparagine 64. The active-site Proton donor is cysteine 73. Residues glycine 74 to asparagine 75, asparagine 157, asparagine 190, and glutamate 208 to arginine 209 contribute to the substrate site. Catalysis depends on cysteine 217, which acts as the Proton acceptor. Glycine 218 to serine 219 lines the substrate pocket.

Belongs to the diaminopimelate epimerase family. As to quaternary structure, homodimer.

The protein localises to the cytoplasm. The enzyme catalyses (2S,6S)-2,6-diaminopimelate = meso-2,6-diaminopimelate. The protein operates within amino-acid biosynthesis; L-lysine biosynthesis via DAP pathway; DL-2,6-diaminopimelate from LL-2,6-diaminopimelate: step 1/1. Functionally, catalyzes the stereoinversion of LL-2,6-diaminopimelate (L,L-DAP) to meso-diaminopimelate (meso-DAP), a precursor of L-lysine and an essential component of the bacterial peptidoglycan. The chain is Diaminopimelate epimerase from Mannheimia succiniciproducens (strain KCTC 0769BP / MBEL55E).